A 175-amino-acid polypeptide reads, in one-letter code: Co-chaperone protein HscB homolog (175 aa).

One can recognise a J domain in the interval 7 to 79; that stretch reads SHFDLFHLPA…LKRASYLLSL (73 aa).

This sequence belongs to the HscB family. Interacts with HscA and stimulates its ATPase activity.

Functionally, co-chaperone involved in the maturation of iron-sulfur cluster-containing proteins. Seems to help targeting proteins to be folded toward HscA. The sequence is that of Co-chaperone protein HscB homolog from Burkholderia cenocepacia (strain ATCC BAA-245 / DSM 16553 / LMG 16656 / NCTC 13227 / J2315 / CF5610) (Burkholderia cepacia (strain J2315)).